Here is a 146-residue protein sequence, read N- to C-terminus: Large ribosomal subunit protein uL15x (146 aa).

Composition is skewed to basic residues over residues 1–14 (MTTR…KRGH) and 21–30 (RIGKHRKHPG). The interval 1-35 (MTTRFKKNRKKRGHVSAGHGRIGKHRKHPGGRGNA) is disordered.

Belongs to the universal ribosomal protein uL15 family.

The polypeptide is Large ribosomal subunit protein uL15x (RPL27AC) (Arabidopsis thaliana (Mouse-ear cress)).